The sequence spans 150 residues: L-alanine exporter AlaE (150 aa).

The next 4 membrane-spanning stretches (helical) occupy residues 17–37 (FAMV…ISGM), 48–68 (LSIP…DFML), 86–106 (LVAY…VVGA), and 111–131 (IITA…FYGY).

The protein belongs to the AlaE exporter family.

The protein resides in the cell inner membrane. In terms of biological role, exports L-alanine. The chain is L-alanine exporter AlaE from Aliivibrio fischeri (strain ATCC 700601 / ES114) (Vibrio fischeri).